The chain runs to 335 residues: Phosphate acyltransferase (335 aa).

The protein belongs to the PlsX family. As to quaternary structure, homodimer. Probably interacts with PlsY.

The protein localises to the cytoplasm. The catalysed reaction is a fatty acyl-[ACP] + phosphate = an acyl phosphate + holo-[ACP]. It participates in lipid metabolism; phospholipid metabolism. In terms of biological role, catalyzes the reversible formation of acyl-phosphate (acyl-PO(4)) from acyl-[acyl-carrier-protein] (acyl-ACP). This enzyme utilizes acyl-ACP as fatty acyl donor, but not acyl-CoA. In Streptococcus equi subsp. zooepidemicus (strain H70), this protein is Phosphate acyltransferase.